The sequence spans 828 residues: Leucine--tRNA ligase (828 aa).

Residues Pro-36–His-46 carry the 'HIGH' region motif. Residues Lys-595–Ser-599 carry the 'KMSKS' region motif. Lys-598 contributes to the ATP binding site.

Belongs to the class-I aminoacyl-tRNA synthetase family.

Its subcellular location is the cytoplasm. The enzyme catalyses tRNA(Leu) + L-leucine + ATP = L-leucyl-tRNA(Leu) + AMP + diphosphate. This is Leucine--tRNA ligase from Rickettsia prowazekii (strain Madrid E).